The chain runs to 177 residues: UPF0114 protein HPAG1_0183 (177 aa).

Transmembrane regions (helical) follow at residues 15 to 35 (WLLAPLCIAMSLVLVVLGYVF), 54 to 74 (LVLSALGLVDLLFMAGLVLMV), 102 to 122 (FNALKLKVSLSIVAISAIFLL), and 145 to 165 (PIFWQVVIHLVFVCSALLAAV).

It belongs to the UPF0114 family.

The protein resides in the cell membrane. The polypeptide is UPF0114 protein HPAG1_0183 (Helicobacter pylori (strain HPAG1)).